Reading from the N-terminus, the 332-residue chain is MHHVADWKKEKVAELEDLTNSHEIIGIVNLADIPAKQLQTMRKSLGDNAILKMSRKNFIKIALENSDKEEVEGLADYLEGQPAMVFTKMNPFKLFKILEDSKTEAPAKAGSIAPADIVVPAGDTSFPPGPILGELQQVGIPAKIDKGSIVVTDDAKIVDEGEEIPKAVADILTKLEIHPMEVGIDLLAVCEGDTIYTADVLAIDEEETIQTLANAYQSAINLSVYAGILNSESAPLLIQKAARDALNLAINANILTSETTDKILSKAYAQMLAVAKLLSSEAIDDELNEKLNSQAAAAPVAVEDNTEEPEEEEEEEEDAAESAAAGLGALFG.

A disordered region spans residues 294–332; sequence QAAAAPVAVEDNTEEPEEEEEEEEDAAESAAAGLGALFG. Acidic residues predominate over residues 304–320; it reads DNTEEPEEEEEEEEDAA.

Belongs to the universal ribosomal protein uL10 family. Part of the 50S ribosomal subunit. Forms part of the ribosomal stalk which helps the ribosome interact with GTP-bound translation factors. Forms a heptameric L10(L12)2(L12)2(L12)2 complex, where L10 forms an elongated spine to which the L12 dimers bind in a sequential fashion.

In terms of biological role, forms part of the ribosomal stalk, playing a central role in the interaction of the ribosome with GTP-bound translation factors. The polypeptide is Large ribosomal subunit protein uL10 (Methanosphaera stadtmanae (strain ATCC 43021 / DSM 3091 / JCM 11832 / MCB-3)).